The following is a 164-amino-acid chain: HTH-type transcriptional regulator PapX (164 aa).

In terms of domain architecture, HTH marR-type spans 25-159; that stretch reads EHLLMQLCIR…FEVISKKLLA (135 aa).

It localises to the cytoplasm. The polypeptide is HTH-type transcriptional regulator PapX (papX) (Escherichia coli).